We begin with the raw amino-acid sequence, 100 residues long: Urease subunit gamma (100 aa).

The protein belongs to the urease gamma subunit family. In terms of assembly, heterotrimer of UreA (gamma), UreB (beta) and UreC (alpha) subunits. Three heterotrimers associate to form the active enzyme.

Its subcellular location is the cytoplasm. The catalysed reaction is urea + 2 H2O + H(+) = hydrogencarbonate + 2 NH4(+). Its pathway is nitrogen metabolism; urea degradation; CO(2) and NH(3) from urea (urease route): step 1/1. This Pseudomonas putida (strain ATCC 700007 / DSM 6899 / JCM 31910 / BCRC 17059 / LMG 24140 / F1) protein is Urease subunit gamma.